We begin with the raw amino-acid sequence, 270 residues long: Aliphatic sulfonates import ATP-binding protein SsuB (270 aa).

Positions 17 to 238 (LAANDLRRTF…VRGSHRLAAL (222 aa)) constitute an ABC transporter domain. 49–56 (GRSGCGKS) provides a ligand contact to ATP. Residues 250 to 270 (PGTPPEPEPVAPLPTHLRWAH) are disordered. Residues 251-261 (GTPPEPEPVAP) are compositionally biased toward pro residues.

Belongs to the ABC transporter superfamily. Aliphatic sulfonates importer (TC 3.A.1.17.2) family. As to quaternary structure, the complex is composed of two ATP-binding proteins (SsuB), two transmembrane proteins (SsuC) and a solute-binding protein (SsuA).

It localises to the cell inner membrane. It carries out the reaction ATP + H2O + aliphatic sulfonate-[sulfonate-binding protein]Side 1 = ADP + phosphate + aliphatic sulfonateSide 2 + [sulfonate-binding protein]Side 1.. Part of the ABC transporter complex SsuABC involved in aliphatic sulfonates import. Responsible for energy coupling to the transport system. The chain is Aliphatic sulfonates import ATP-binding protein SsuB from Pseudomonas entomophila (strain L48).